The sequence spans 141 residues: ATP synthase epsilon chain (141 aa).

The protein belongs to the ATPase epsilon chain family. In terms of assembly, F-type ATPases have 2 components, CF(1) - the catalytic core - and CF(0) - the membrane proton channel. CF(1) has five subunits: alpha(3), beta(3), gamma(1), delta(1), epsilon(1). CF(0) has three main subunits: a, b and c.

Its subcellular location is the cell inner membrane. Functionally, produces ATP from ADP in the presence of a proton gradient across the membrane. This is ATP synthase epsilon chain (atpC) from Acidithiobacillus ferridurans.